A 1616-amino-acid chain; its full sequence is DNA (cytosine-5)-methyltransferase 1 (1616 aa).

The tract at residues 1–120 is interaction with DMAP1; it reads MPARTAPARV…NQARSEARRV (120 aa). Residues 1–148 form an interaction with DNMT3A region; it reads MPARTAPARV…RRSKSDGEAK (148 aa). Interaction with the PRC2/EED-EZH2 complex stretches follow at residues 1-336 and 308-606; these read MPAR…TEKK and NPQI…TIRH. The DMAP1-binding domain occupies 16–109; it reads PAISLPDDVR…NREVNGRLEN (94 aa). K70 is subject to N6,N6-dimethyllysine. Residues 103–349 are disordered; the sequence is VNGRLENGNQ…AKTVMNSKTH (247 aa). 2 positions are modified to phosphoserine: S127 and S133. At T137 the chain carries Phosphothreonine. S141 is modified (phosphoserine). K142 carries the post-translational modification N6-methyllysine; by SETD7. Phosphoserine; by PKB/AKT1 is present on S143. The segment at 149–217 is interaction with DNMT3B; the sequence is PEPSPSPRIT…TSRERVARPL (69 aa). S152 and S154 each carry phosphoserine. At K160 the chain carries N6-acetyllysine. Residues 163 to 174 are interaction with PCNA; the sequence is RQTTITSHFAKG. Residue T166 is modified to Phosphothreonine. 2 positions are modified to N6-acetyllysine: K173 and K188. A Nuclear localization signal motif is present at residues 177–205; sequence KRKPQEESERAKSDESIKEEDKDQDEKRR. Basic and acidic residues-rich tracts occupy residues 179–214, 221–267, and 281–306; these read KPQEESERAKSDESIKEEDKDQDEKRRRVTSRERVA, EPER…REAR, and KDEKKHRSQPKDLAAKRRPEEKEPEK. N6-acetyllysine; alternate is present on K259. A Glycyl lysine isopeptide (Lys-Gly) (interchain with G-Cter in SUMO2); alternate cross-link involves residue K259. The homodimerization stretch occupies residues 310–502; that stretch reads QISDEKDEDE…PEYAPIFGLM (193 aa). Phosphoserine is present on S312. The segment covering 321 to 337 has biased composition (basic and acidic residues); it reads EEKRRKTTPKEPTEKKM. A DNA replication foci-targeting sequence region spans residues 331-550; the sequence is EPTEKKMARA…NLNRFTEDSL (220 aa). 2 residues coordinate Zn(2+): C353 and C356. K366 is modified (N6-acetyllysine). Phosphoserine is present on residues S394 and S398. Zn(2+)-binding residues include C414 and H418. Phosphoserine occurs at positions 509 and 549. A CXXC-type zinc finger spans residues 646 to 692; the sequence is NAFKRRRCGVCEVCQQPECGKCKACKDMVKFGGSGRSKQACQERRCP. Residues 651–697 are required for activity; sequence RRCGVCEVCQQPECGKCKACKDMVKFGGSGRSKQACQERRCPNMAMK. Residues C653, C656, C659, C664, C667, C670, C686, and C691 each coordinate Zn(2+). Residues 693–754 form an autoinhibitory linker region; sequence NMAMKEADDD…SYYKKVCIDA (62 aa). Residues 699–709 show a composition bias toward acidic residues; the sequence is ADDDEEVDDNI. Residues 699–729 are disordered; sequence ADDDEEVDDNIPEMPSPKKMHQGKKKKQNKN. S714 is modified (phosphoserine). The segment covering 716–728 has biased composition (basic residues); it reads KKMHQGKKKKQNK. Position 732 is a phosphoserine (S732). The residue at position 749 (K749) is an N6-acetyllysine. Positions 755–880 constitute a BAH 1 domain; that stretch reads ETLEVGDCVS…QDYARFESPP (126 aa). S878 is subject to Phosphoserine. An N6-acetyllysine mark is found at K891, K957, K961, K975, and K1054. The BAH 2 domain occupies 972 to 1100; the sequence is HYRKYSDYIK…AKSKSFEDPP (129 aa). Residues 1095 to 1130 form a disordered region; the sequence is SFEDPPNHARSPGNKGKGKGKGKGKPKSQACEPSEP. 5 repeat units span residues 1109–1110, 1111–1112, 1113–1114, 1115–1116, and 1117–1118. Residues 1109–1120 form a 6 X 2 AA tandem repeats of K-G region; it reads KGKGKGKGKGKP. Basic residues predominate over residues 1110-1120; that stretch reads GKGKGKGKGKP. K1111, K1113, and K1115 each carry N6-acetyllysine. The residue at position 1117 (K1117) is an N6-acetyllysine; by EHMT2. An N6-acetyllysine mark is found at K1119 and K1121. A 6; approximate repeat occupies 1119–1120; that stretch reads KP. Residues 1121 to 1616 are interaction with the PRC2/EED-EZH2 complex; sequence KSQACEPSEP…KIKEEEAAKD (496 aa). The region spanning 1139–1599 is the SAM-dependent MTase C5-type domain; that stretch reads LRTLDVFSGC…LEIKLCMLAK (461 aa). Residues 1139 to 1616 are catalytic; the sequence is LRTLDVFSGC…KIKEEEAAKD (478 aa). Residues S1146, 1150 to 1151, 1168 to 1169, 1190 to 1191, and C1191 contribute to the S-adenosyl-L-methionine site; these read GL, EM, and DC. The active site involves C1226. N6-acetyllysine is present on residues K1349 and K1415. Residues N1578 and V1580 each coordinate S-adenosyl-L-methionine. K1609 is covalently cross-linked (Glycyl lysine isopeptide (Lys-Gly) (interchain with G-Cter in SUMO2)).

It belongs to the class I-like SAM-binding methyltransferase superfamily. C5-methyltransferase family. As to quaternary structure, homodimer. Forms a stable complex with E2F1, BB1 and HDAC1. Forms a complex with DMAP1 and HDAC2, with direct interaction. Interacts with the PRC2/EED-EZH2 complex. Probably part of a corepressor complex containing ZNF304, TRIM28, SETDB1 and DNMT1. Interacts with UHRF1; promoting its recruitment to hemimethylated DNA. Interacts with USP7, promoting its deubiquitination. Interacts with PCNA. Interacts with MBD2 and MBD3. Interacts with DNMT3A and DNMT3B. Interacts with UBC9. Interacts with CSNK1D. Interacts with HDAC1. Interacts with BAZ2A/TIP5. Interacts with SIRT7. Interacts with ZNF263; recruited to the SIX3 promoter along with other proteins involved in chromatin modification and transcriptional corepression where it contributes to transcriptional repression. Interacts with L3MBTL3 and DCAF5; the interaction requires DNMT1 methylation at Lys-142 and is necessary to target DNMT1 for ubiquitination by the CRL4-DCAF5 E3 ubiquitin ligase complex and proteasomal degradation. Interacts with PHF20L1; the interaction requires DNMT1 methylation at Lys-142 and protects DNMT1 from ubiquitination and proteasomal degradation. Sumoylated; sumoylation increases activity. Post-translationally, acetylation on multiple lysines, mainly by KAT2B/PCAF, regulates cell cycle G(2)/M transition. Deacetylation of Lys-1349 and Lys-1415 by SIRT1 increases methyltransferase activity. In terms of processing, phosphorylation of Ser-154 by CDKs is important for enzymatic activity and protein stability. Phosphorylation of Ser-143 by AKT1 prevents methylation by SETD7 thereby increasing DNMT1 stability. Methylation at Lys-142 by SETD7 is necessary for the regulation of DNMT1 proteasomal degradation. Post-translationally, ubiquitinated by UHRF1; interaction with USP7 counteracts ubiquitination by UHRF1 by promoting deubiquitination and preventing degradation by the proteasome. As to expression, ubiquitous; highly expressed in fetal tissues, heart, kidney, placenta, peripheral blood mononuclear cells, and expressed at lower levels in spleen, lung, brain, small intestine, colon, liver, and skeletal muscle. Isoform 2 is less expressed than isoform 1.

The protein localises to the nucleus. It catalyses the reaction a 2'-deoxycytidine in DNA + S-adenosyl-L-methionine = a 5-methyl-2'-deoxycytidine in DNA + S-adenosyl-L-homocysteine + H(+). Its function is as follows. Methylates CpG residues. Preferentially methylates hemimethylated DNA. Associates with DNA replication sites in S phase maintaining the methylation pattern in the newly synthesized strand, that is essential for epigenetic inheritance. Associates with chromatin during G2 and M phases to maintain DNA methylation independently of replication. It is responsible for maintaining methylation patterns established in development. DNA methylation is coordinated with methylation of histones. Mediates transcriptional repression by direct binding to HDAC2. In association with DNMT3B and via the recruitment of CTCFL/BORIS, involved in activation of BAG1 gene expression by modulating dimethylation of promoter histone H3 at H3K4 and H3K9. Probably forms a corepressor complex required for activated KRAS-mediated promoter hypermethylation and transcriptional silencing of tumor suppressor genes (TSGs) or other tumor-related genes in colorectal cancer (CRC) cells. Also required to maintain a transcriptionally repressive state of genes in undifferentiated embryonic stem cells (ESCs). Associates at promoter regions of tumor suppressor genes (TSGs) leading to their gene silencing. Promotes tumor growth. The protein is DNA (cytosine-5)-methyltransferase 1 (DNMT1) of Homo sapiens (Human).